Reading from the N-terminus, the 289-residue chain is Phospholipase A1 (289 aa).

The first 20 residues, 1–20 (MRTLQGWLLPVFMLPMAVYA), serve as a signal peptide directing secretion. Residues 21–52 (QEATVKEVHDAPAVRGSIIANMLQEHDNPFTL) are Periplasmic-facing. A beta stranded membrane pass occupies residues 53–65 (YPYDTNYLIYTQT). Residues 66–84 (SDLNKEAIASYDWAENARK) lie on the Extracellular side of the membrane. Residues 85–99 (DEVKFQLSLAFPLWR) traverse the membrane as a beta stranded segment. Topologically, residues 100–105 (GILGPN) are periplasmic. The beta stranded transmembrane segment at 106–118 (SVLGASYTQKSWW) threads the bilayer. Over 119–128 (QLSNSEESSP) the chain is Extracellular. Position 126 (Ser-126) interacts with Ca(2+). The chain crosses the membrane as a beta stranded span at residues 129 to 148 (FRETNYEPQLFLGFATDYRF). Topologically, residues 149–150 (AG) are periplasmic. The chain crosses the membrane as a beta stranded span at residues 151–164 (WTLRDVEMGYNHDS). His-162 serves as the catalytic Proton acceptor. Ser-164 (nucleophile) is an active-site residue. At 165-173 (NGRSDPTSR) the chain is on the extracellular side. Positions 167 and 172 each coordinate Ca(2+). Residues 174–186 (SWNRLYTRLMAEN) traverse the membrane as a beta stranded segment. Residues 187–188 (GN) lie on the Periplasmic side of the membrane. A beta stranded transmembrane segment spans residues 189–198 (WLVEVKPWYV). Residues 199 to 216 (VGNTDDNPDITKYMGYYQ) lie on the Extracellular side of the membrane. Residue Asp-204 participates in Ca(2+) binding. A beta stranded transmembrane segment spans residues 217 to 223 (LKIGYHL). Residues 224-225 (GD) lie on the Periplasmic side of the membrane. Residues 226–234 (AVLSAKGQY) form a beta stranded membrane-spanning segment. The Extracellular portion of the chain corresponds to 235–241 (NWNTGYG). A beta stranded transmembrane segment spans residues 242-250 (GAELGLSYP). Residues 251 to 255 (ITKHV) lie on the Periplasmic side of the membrane. The chain crosses the membrane as a beta stranded span at residues 256 to 265 (RLYTQVYSGY). At 266 to 274 (GESLIDYNF) the chain is on the extracellular side. The chain crosses the membrane as a beta stranded span at residues 275 to 286 (NQTRVGVGVMLN). Over 287-289 (DLF) the chain is Periplasmic.

It belongs to the phospholipase A1 family. As to quaternary structure, homodimer; dimerization is reversible, and the dimeric form is the active one. The cofactor is Ca(2+).

It is found in the cell outer membrane. The catalysed reaction is a 1,2-diacyl-sn-glycero-3-phosphocholine + H2O = a 2-acyl-sn-glycero-3-phosphocholine + a fatty acid + H(+). It carries out the reaction a 1,2-diacyl-sn-glycero-3-phosphocholine + H2O = a 1-acyl-sn-glycero-3-phosphocholine + a fatty acid + H(+). Hydrolysis of phosphatidylcholine with phospholipase A2 (EC 3.1.1.4) and phospholipase A1 (EC 3.1.1.32) activities. This Escherichia coli O157:H7 protein is Phospholipase A1 (pldA).